The chain runs to 169 residues: Small ribosomal subunit protein uS5 (169 aa).

Residues 15-79 (LKEQVVAINR…EAAKKNLRRI (65 aa)) form the S5 DRBM domain.

This sequence belongs to the universal ribosomal protein uS5 family. Part of the 30S ribosomal subunit. Contacts proteins S4 and S8.

With S4 and S12 plays an important role in translational accuracy. In terms of biological role, located at the back of the 30S subunit body where it stabilizes the conformation of the head with respect to the body. In Solibacter usitatus (strain Ellin6076), this protein is Small ribosomal subunit protein uS5.